Here is a 341-residue protein sequence, read N- to C-terminus: MLDSPHNLYIKKFMLCYIIYYFLICHLYNHIFNLREIMLCSCGNEAFYYQKYSNRHLCKECFKKDIERRAKKVLGKDIIRNNVKIGIGISGGKDSLVMAYILKELFKHIPNAKLICFFVDEGIKGFRNIAEKYVKEFCKEYNLDLKIIKFEDEIGYTLDEIVKNDYLSKLNIGKPCSFCGVVRRYLLNKHALKEGCDYLAIGHNLDDFCQTILMNYVEGNIKNIIQFGKEFEGGGFVKRIKPLKLIPEEEVKLYAEINNIKYQREPCPYSSLSYRHRMKKVIEILEEEKPGVKFSILRGYEKLLKYLNVKEEIRRCEICGFPCSGNICKVCSWLIKLKEIK.

Zn(2+)-binding residues include Cys-40, Cys-42, Cys-58, and Cys-61. Gly-88 is an ATP binding site. The [4Fe-4S] cluster site is built by Cys-176 and Cys-179. 2 residues coordinate ATP: Arg-183 and Gly-202. Cys-267 is a [4Fe-4S] cluster binding site. Residues Cys-316, Cys-319, Cys-328, and Cys-331 each contribute to the Zn(2+) site.

This sequence belongs to the TtcA family. [4Fe-4S] cluster is required as a cofactor. The cofactor is Mg(2+).

This chain is Probable sulfurtransferase, found in Methanocaldococcus jannaschii (strain ATCC 43067 / DSM 2661 / JAL-1 / JCM 10045 / NBRC 100440) (Methanococcus jannaschii).